The primary structure comprises 560 residues: Zorya protein ZorC (560 aa).

In terms of biological role, component of antiviral defense system Zorya type I, composed of ZorA, ZorB, ZorC and ZorD. Expression of Zorya type I in E.coli (strain MG1655) confers 10,000-fold resistance to phage SECphi27, 100-fold resistance to lambda, and 10-fold resistance to T7. While most T7 infected Zorya-containing cells undergo abortive infection, a minority produce viable phage progeny. These eventually accumulate to a high multiplicity of infection, leading to culture collapse by 2 hours after initial infection. ZorA and ZorB probably assemble in the cell inner membrane and exert their effect there. The polypeptide is Zorya protein ZorC (Escherichia coli O139:H28 (strain E24377A / ETEC)).